The following is a 510-amino-acid chain: Ent-sandaracopimaradiene 3-hydroxylase (510 aa).

The helical transmembrane segment at 4–24 (MLVAGAGAAAVAAVGGLVAAA) threads the bilayer. Heme is bound at residue Cys454.

Belongs to the cytochrome P450 family. As to quaternary structure, interacts with the rice dwarf virus (RDV) P2 protein. Requires heme as cofactor. Expressed in leaf blades and sheaths, stems and panicles.

The protein localises to the membrane. It catalyses the reaction ent-sandaracopimara-8(14),15-diene + reduced [NADPH--hemoprotein reductase] + O2 = ent-sandaracopimaradien-3beta-ol + oxidized [NADPH--hemoprotein reductase] + H2O + H(+). The enzyme catalyses 9beta-pimara-7,15-diene + reduced [NADPH--hemoprotein reductase] + O2 = 9beta-pimara-7,15-diene-3beta-ol + oxidized [NADPH--hemoprotein reductase] + H2O + H(+). Its function is as follows. Catalyzes the hydroxylation of ent-sandaracopimaradiene at the C3alpha position to produce ent-3beta-hydroxy-sandaracopimaradiene, an intermediates for the biosynthesis of oryzalexin D and oryzalexin E phytoalexins. Catalyzes the hydroxylation of ent-cassadiene at the C3alpha position to produce 3alpha-hydroxy-ent-cassadiene, which may be an intermediate for the biosynthesis of phytocassane phytoalexins. Catalyzes the hydroxylation of syn-pimaradiene (9-beta-pimara-7,15-diene) at the C3beta position to produce 3-beta-syn-pimaradiene. Can hydroxylate ent-kaurene in vitro, but the product is not ent-kauren-19-ol as expected for ent-kaurene oxidase activity. The polypeptide is Ent-sandaracopimaradiene 3-hydroxylase (Oryza sativa subsp. japonica (Rice)).